Reading from the N-terminus, the 729-residue chain is Palmitoyltransferase akr1 (729 aa).

A compositionally biased stretch (basic and acidic residues) spans 1–11 (MVHHDGADAHA). The segment at 1–28 (MVHHDGADAHAGHAAPAQPPMKSDTATP) is disordered. At 1–297 (MVHHDGADAH…DRRSFMTKFT (297 aa)) the chain is on the cytoplasmic side. ANK repeat units follow at residues 76 to 105 (EGIT…EINK), 110 to 139 (SVAT…DPLI), 143 to 172 (QGYN…PVDV), 176 to 205 (YGHT…SVHA), and 209 to 238 (QGFT…DRFA). Transmembrane regions (helical) follow at residues 298–318 (FLWP…MPVF) and 319–339 (VGIP…QQVI). Residues 340–354 (AYAPPDMRQLQKTPW) are Cytoplasmic-facing. A helical membrane pass occupies residues 355 to 375 (MAGIFAGSLFLCIMNWLLHIF). The Lumenal portion of the chain corresponds to 376–383 (GSTMFGQD). A helical transmembrane segment spans residues 384–404 (SAVIPNLLFAFFISMTIWFYI). Residues 405-483 (RCMVDDPGFV…YNCIGVNNHR (79 aa)) are Cytoplasmic-facing. Residues 440-490 (NFCVTCMIRTPLRSKHCRRCQRCVAKHDHHCPWVYNCIGVNNHRHFFFYLI) form the DHHC domain. The active-site S-palmitoyl cysteine intermediate is Cys470. Residues 484–504 (HFFFYLINLTLSVVTYDWLTY) traverse the membrane as a helical segment. Residues 505-534 (RYLSTLSETASDECNILAPSLCRIVNADTY) lie on the Lumenal side of the membrane. The helical transmembrane segment at 535–555 (SLLTAIWASLQLTWVSMLLFV) threads the bilayer. The Cytoplasmic segment spans residues 556 to 729 (QFVQVSSAMT…GYESVAGEEV (174 aa)). Disordered stretches follow at residues 587–620 (STGA…HGHN) and 709–729 (TSGG…GEEV). The segment covering 592 to 603 (LNPPSLPAPGPS) has biased composition (pro residues). A compositionally biased stretch (basic residues) spans 611-620 (HGGRHAHGHN).

It belongs to the DHHC palmitoyltransferase family. AKR/ZDHHC17 subfamily.

Its subcellular location is the early endosome membrane. It is found in the golgi apparatus membrane. It catalyses the reaction L-cysteinyl-[protein] + hexadecanoyl-CoA = S-hexadecanoyl-L-cysteinyl-[protein] + CoA. Palmitoyltransferase specific for casein kinase 1. This chain is Palmitoyltransferase akr1 (ptr-1), found in Neurospora crassa (strain ATCC 24698 / 74-OR23-1A / CBS 708.71 / DSM 1257 / FGSC 987).